The chain runs to 212 residues: Agglutinin isolectin 1 (212 aa).

The first 26 residues, 1-26 (MKMMSTRALALGAAAVLAFAAATAQA), serve as a signal peptide directing secretion. Gln27 carries the pyrrolidone carboxylic acid modification. 4 Chitin-binding type-1 domains span residues 27 to 68 (QRCG…ACWT), 69 to 111 (SKRC…PCRA), 112 to 154 (DIKC…ACST), and 155 to 197 (DKPC…GCDG). 16 disulfide bridges follow: Cys29–Cys44, Cys38–Cys50, Cys43–Cys57, Cys61–Cys66, Cys72–Cys87, Cys81–Cys93, Cys86–Cys100, Cys104–Cys109, Cys115–Cys130, Cys124–Cys136, Cys129–Cys143, Cys147–Cys152, Cys158–Cys173, Cys167–Cys179, Cys172–Cys186, and Cys190–Cys195. 36-38 (MEC) serves as a coordination point for substrate. Position 88-99 (88-99 (SQYGYCGFGAEY)) interacts with substrate. Substrate is bound at residue 140–141 (SE). Residues 198–212 (VFAEAITANSTLLQE) constitute a propeptide that is removed on maturation.

Homodimer, u-shaped.

Functionally, N-acetyl-D-glucosamine / N-acetyl-D-neuraminic acid binding lectin. This chain is Agglutinin isolectin 1, found in Triticum aestivum (Wheat).